The sequence spans 25 residues: Chaperonin GroEL (25 aa).

Belongs to the chaperonin (HSP60) family. Forms a cylinder of 14 subunits composed of two heptameric rings stacked back-to-back. Interacts with the co-chaperonin GroES.

The protein localises to the cytoplasm. It carries out the reaction ATP + H2O + a folded polypeptide = ADP + phosphate + an unfolded polypeptide.. Together with its co-chaperonin GroES, plays an essential role in assisting protein folding. The GroEL-GroES system forms a nano-cage that allows encapsulation of the non-native substrate proteins and provides a physical environment optimized to promote and accelerate protein folding. This Delftia acidovorans (Pseudomonas acidovorans) protein is Chaperonin GroEL.